The sequence spans 470 residues: Putative multidrug resistance protein MdtD (470 aa).

The Periplasmic portion of the chain corresponds to 1–11 (MTELPDNTRWQ). The chain crosses the membrane as a helical span at residues 12-32 (LWIVAFGFFMQSLDTTIVNTA). Topologically, residues 33-48 (LPSMAKSLGESPLHMH) are cytoplasmic. The chain crosses the membrane as a helical span at residues 49–69 (MVVVSYVLTVAVMLPASGWLA). The Periplasmic segment spans residues 70 to 76 (DKIGVRN). A helical membrane pass occupies residues 77 to 97 (IFFAAIVLFTLGSLFCALSGT). Residues 98–101 (LNQL) lie on the Cytoplasmic side of the membrane. A helical transmembrane segment spans residues 102 to 124 (VLARVLQGVGGAMMVPVGRLTVM). The Periplasmic segment spans residues 125–137 (KIVPRTQYMAAMT). Residues 138 to 158 (FVTLPGQIGPLLGPALGGVLV) form a helical membrane-spanning segment. The Cytoplasmic portion of the chain corresponds to 159 to 164 (EYASWH). Residues 165–185 (WIFLINIPVGIVGAMATFMLM) traverse the membrane as a helical segment. Residues 186–196 (PNYTIETRRFD) lie on the Periplasmic side of the membrane. Residues 197–217 (LPGFLLLAIGMAVLTLALDGS) form a helical membrane-spanning segment. Topologically, residues 218-224 (KSMGISP) are cytoplasmic. A helical membrane pass occupies residues 225–245 (WTLAGLAAGGAAAILLYLFHA). Residues 246 to 262 (KKNSGALFSLRLFRTPT) lie on the Periplasmic side of the membrane. Residues 263-283 (FSLGLLGSFAGRIGSGMLPFM) form a helical membrane-spanning segment. Residues 284–285 (TP) lie on the Cytoplasmic side of the membrane. The helical transmembrane segment at 286–306 (VFLQIGLGFSPFHAGLMMIPM) threads the bilayer. The Periplasmic segment spans residues 307-341 (VLGSMGMKRIVVQIVNRFGYRRVLVATTLGLALVS). The chain crosses the membrane as a helical span at residues 342 to 362 (LLFMSVALLGWYYLLPLVLLL). Over 363–395 (QGMVNSARFSSMNTLTLKDLPDTLASSGNSLLS) the chain is Cytoplasmic. The helical transmembrane segment at 396 to 416 (MIMQLSMSIGVTIAGMLLGMF) threads the bilayer. Residues 417–430 (GQQHIGIDSSATHH) lie on the Periplasmic side of the membrane. The chain crosses the membrane as a helical span at residues 431–451 (VFMYTWLCMAVIIALPAIIFA). The Cytoplasmic portion of the chain corresponds to 452–470 (RVPNDTQQNMVISRRKRSL).

This sequence belongs to the major facilitator superfamily. TCR/Tet family.

It localises to the cell inner membrane. The protein is Putative multidrug resistance protein MdtD of Salmonella dublin (strain CT_02021853).